The chain runs to 588 residues: Putative ABC transporter ATP-binding protein PAM_020 (588 aa).

2 consecutive ABC transporter domains span residues 6-247 (IIFK…GIQE) and 317-551 (LQLQ…TSLN). ATP-binding positions include 40–47 (GKNGSGKS) and 351–358 (GKNGSGKS).

This sequence belongs to the ABC transporter superfamily.

It localises to the cell membrane. In terms of biological role, probably part of an ABC transporter complex. Responsible for energy coupling to the transport system. The chain is Putative ABC transporter ATP-binding protein PAM_020 from Onion yellows phytoplasma (strain OY-M).